A 223-amino-acid polypeptide reads, in one-letter code: Serine/threonine/tyrosine-interacting protein (223 aa).

Residues 28–176 (EMQEILPGLF…LQEYEAIYLA (149 aa)) enclose the Tyrosine-protein phosphatase domain. The Interaction with FBXW7 signature appears at 76–78 (FQQ). Residues Ser-184, Ser-193, and Ser-201 each carry the phosphoserine modification. Residues 197 to 223 (GTTGSLKRTHEEEDDFGTMQVATAQNG) are disordered.

It belongs to the protein-tyrosine phosphatase family. Non-receptor class subfamily. In terms of assembly, interacts with MAPK1; independently of MAPK1 phosphorylation status. Interacts with CARHSP1/Crhsp-24. Interacts (via FQQ motif) with FBXW7 (via F-box domain); the interaction is direct and prevents FBXW7 interaction with SKP1, a component of the SCF(FBXW7) complex.

It localises to the nucleus. It is found in the cytoplasm. The protein localises to the cytosol. Its function is as follows. Catalytically inactive phosphatase. Acts as a nuclear anchor for MAPK1/MAPK3 (ERK1/ERK2). Modulates cell-fate decisions and cell migration by spatiotemporal regulation of MAPK1/MAPK3 (ERK1/ERK2). By binding to the F-box of FBXW7, prevents the assembly of FBXW7 into the SCF E3 ubiquitin-protein ligase complex, and thereby inhibits degradation of its substrates. Plays a role in spermatogenesis. The chain is Serine/threonine/tyrosine-interacting protein (STYX) from Pongo abelii (Sumatran orangutan).